A 159-amino-acid chain; its full sequence is Ribosome maturation factor RimP (159 aa).

It belongs to the RimP family.

It is found in the cytoplasm. Functionally, required for maturation of 30S ribosomal subunits. The chain is Ribosome maturation factor RimP from Geotalea uraniireducens (strain Rf4) (Geobacter uraniireducens).